The following is a 218-amino-acid chain: MGQKVNPCIFRTGPNLPRNWESVLYAKNNYSDFLLKILKIRKIINTEYSFAQITKILIEWPSSKNIVVNIYAKKIGVIIGKSGGDIEKLKQNIAKITSADVSINIREVKKPELEEAFIAQTIAQQLERRQSFKKVMKKAIHASMKQGAKGIKIICSGRLGGVEIARSESYKEGRVPLQTIRADIRYAFAEAITTYGVIGVKVWVYRCDVNQSRINEVK.

Positions 40–109 (IRKIINTEYS…DVSINIREVK (70 aa)) constitute a KH type-2 domain.

It belongs to the universal ribosomal protein uS3 family. As to quaternary structure, part of the 30S ribosomal subunit. Forms a tight complex with proteins S10 and S14.

Its function is as follows. Binds the lower part of the 30S subunit head. Binds mRNA in the 70S ribosome, positioning it for translation. The protein is Small ribosomal subunit protein uS3 of Orientia tsutsugamushi (strain Boryong) (Rickettsia tsutsugamushi).